A 91-amino-acid polypeptide reads, in one-letter code: uncharacterized protein (91 aa).

The interval 71 to 91 is disordered; it reads NRENNSRSSVKQIINQETEEE. A compositionally biased stretch (polar residues) spans 76–91; the sequence is SRSSVKQIINQETEEE.

This is an uncharacterized protein from Bacillus subtilis (strain 168).